The following is a 98-amino-acid chain: Small ribosomal subunit protein bS6 (98 aa).

The protein belongs to the bacterial ribosomal protein bS6 family.

Functionally, binds together with bS18 to 16S ribosomal RNA. The sequence is that of Small ribosomal subunit protein bS6 from Staphylococcus aureus (strain NCTC 8325 / PS 47).